A 346-amino-acid polypeptide reads, in one-letter code: Selenide, water dikinase (346 aa).

Residue Sec16 is part of the active site. Position 16 (Sec16) is a non-standard amino acid, selenocysteine. ATP is bound by residues Lys19 and 47 to 49 (TAD). Asp50 is a binding site for Mg(2+). Residues Asp67, Asp90, and 138-140 (GHS) contribute to the ATP site. Asp90 contacts Mg(2+). Asp226 provides a ligand contact to Mg(2+).

This sequence belongs to the selenophosphate synthase 1 family. Class I subfamily. Homodimer. Mg(2+) serves as cofactor.

It catalyses the reaction hydrogenselenide + ATP + H2O = selenophosphate + AMP + phosphate + 2 H(+). Its function is as follows. Synthesizes selenophosphate from selenide and ATP. This chain is Selenide, water dikinase, found in Haemophilus ducreyi (strain 35000HP / ATCC 700724).